Reading from the N-terminus, the 390-residue chain is Phosphopentomutase (390 aa).

Residues D10, D282, H287, D323, H324, and H335 each coordinate Mn(2+).

Belongs to the phosphopentomutase family. It depends on Mn(2+) as a cofactor.

The protein localises to the cytoplasm. It catalyses the reaction 2-deoxy-alpha-D-ribose 1-phosphate = 2-deoxy-D-ribose 5-phosphate. It carries out the reaction alpha-D-ribose 1-phosphate = D-ribose 5-phosphate. It participates in carbohydrate degradation; 2-deoxy-D-ribose 1-phosphate degradation; D-glyceraldehyde 3-phosphate and acetaldehyde from 2-deoxy-alpha-D-ribose 1-phosphate: step 1/2. Functionally, isomerase that catalyzes the conversion of deoxy-ribose 1-phosphate (dRib-1-P) and ribose 1-phosphate (Rib-1-P) to deoxy-ribose 5-phosphate (dRib-5-P) and ribose 5-phosphate (Rib-5-P), respectively. In Lachnoclostridium phytofermentans (strain ATCC 700394 / DSM 18823 / ISDg) (Clostridium phytofermentans), this protein is Phosphopentomutase.